The following is a 411-amino-acid chain: Na(+)-translocating NADH-quinone reductase subunit B (411 aa).

3 helical membrane passes run 56 to 76, 121 to 141, and 161 to 181; these read IMITVWLCTFPAMFFGMYNAG, FLPIYLVTFAVGGFWEVLFAV, and ILPATIPLWQVALGITFGVVI. An FMN phosphoryl threonine modification is found at T228. Transmembrane regions (helical) follow at residues 254–274, 284–304, 309–329, 345–365, and 368–388; these read FIPGSVGETSTLAILIGAAVL, IMLGVFVGMALTAMLFTAIGS, MFGMPWYWHLVLGGFAFGMVF, LLFGFLIGVMTVLIRVVNPAF, and GIMLAILFANLFAPMIDHFFV.

It belongs to the NqrB/RnfD family. As to quaternary structure, composed of six subunits; NqrA, NqrB, NqrC, NqrD, NqrE and NqrF. Requires FMN as cofactor.

It is found in the cell inner membrane. It carries out the reaction a ubiquinone + n Na(+)(in) + NADH + H(+) = a ubiquinol + n Na(+)(out) + NAD(+). NQR complex catalyzes the reduction of ubiquinone-1 to ubiquinol by two successive reactions, coupled with the transport of Na(+) ions from the cytoplasm to the periplasm. NqrA to NqrE are probably involved in the second step, the conversion of ubisemiquinone to ubiquinol. The polypeptide is Na(+)-translocating NADH-quinone reductase subunit B (Chromohalobacter salexigens (strain ATCC BAA-138 / DSM 3043 / CIP 106854 / NCIMB 13768 / 1H11)).